The following is a 600-amino-acid chain: UvrABC system protein C (600 aa).

Residues 15–92 (DKPGCYLMKD…IKKYQPYYNV (78 aa)) form the GIY-YIG domain. Residues 197-232 (AQVKQDLTEKMTQASMDLEFERAAEIRDQLKYIEQT) enclose the UVR domain.

Belongs to the UvrC family. In terms of assembly, interacts with UvrB in an incision complex.

The protein resides in the cytoplasm. In terms of biological role, the UvrABC repair system catalyzes the recognition and processing of DNA lesions. UvrC both incises the 5' and 3' sides of the lesion. The N-terminal half is responsible for the 3' incision and the C-terminal half is responsible for the 5' incision. In Lactobacillus johnsonii (strain CNCM I-12250 / La1 / NCC 533), this protein is UvrABC system protein C.